An 839-amino-acid polypeptide reads, in one-letter code: Transient receptor potential cation channel subfamily V member 1 (839 aa).

Residues 1 to 60 (MEKWASLDSDESEPPAQENSCPDPPDRDPNSKPPPAKPHIFATRSRTRLFGKGDSEEASP) form a disordered region. The Cytoplasmic segment spans residues 1–433 (MEKWASLDSD…QDKWDRFVKR (433 aa)). An ANK 1 repeat occupies 111 to 139 (RLYDRRSIFDAVAQSNCQELESLLSFLQK). Arg116 is a binding site for ATP. Ser117 carries the phosphoserine; by PKA and PKD modification. Phosphothreonine; by PKA; in vitro is present on Thr145. Residues 154-186 (TGKTCLLKAMLNLHNGQNDTIALLLDIARKTDS) form an ANK 2 repeat. ATP is bound by residues Lys156, Lys161, Asn165, 200–203 (YKGQ), and 211–212 (ER). 4 ANK repeats span residues 204–229 (TALH…ADVQ), 250–277 (ELPL…QPAD), 286–322 (NTVL…KLHP), and 336–359 (TPLA…REIH). Thr371 is subject to Phosphothreonine; by PKA; in vitro. The ANK 7 repeat unit spans residues 394–416 (NSVLEVIAYSSSETPNRHDMLLV). A helical transmembrane segment spans residues 434–455 (IFYFNFFVYCLYMIIFTTAAYY). Topologically, residues 456 to 472 (RPVEGLPPYKLNNTVGD) are extracellular. The helical transmembrane segment at 473-497 (YFRVTGEILSVSGGVYFFFRGIQYF) threads the bilayer. Residues 498–510 (LQRRPSLKSLFVD) are Cytoplasmic-facing. Ser503 carries the post-translational modification Phosphoserine; by PKC/PRKCE. A helical transmembrane segment spans residues 511-532 (SYSEILFFVQSLFMLVSVVLYF). 512-513 (YS) provides a ligand contact to resiniferatoxin. Residues 533 to 535 (SHR) are Extracellular-facing. A helical transmembrane segment spans residues 536–556 (KEYVASMVFSLAMGWTNMLYY). Positions 551 and 558 each coordinate resiniferatoxin. Residues 557–559 (TRG) lie on the Cytoplasmic side of the membrane. Residues 560–598 (FQQMGIYAVMIEKMILRDLCRFMFVYLVFLFGFSTAVVT) form a helical membrane-spanning segment. Topologically, residues 599–630 (LIEDGKNNSLPVESPPHKCRGSACRPGNSYNS) are extracellular. N-linked (GlcNAc...) asparagine glycosylation is present at Asn605. Positions 631 to 652 (LYSTCLELFKFTIGMGDLEFTE) form an intramembrane region, pore-forming. Residue Gly644 participates in Na(+) binding. The short motif at 644–647 (GMGD) is the Selectivity filter element. Asp647 serves as a coordination point for Ca(2+). The Extracellular portion of the chain corresponds to 653 to 656 (NYDF). Residues 657 to 683 (KAVFIILLLAYVILTYILLLNMLIALM) form a helical membrane-spanning segment. Residues 684 to 839 (GETVNKIAQE…FKDSMAPGEK (156 aa)) lie on the Cytoplasmic side of the membrane. The interval 685-713 (ETVNKIAQESKNIWKLQRAITILDTEKSF) is AD. Thr705 bears the Phosphothreonine mark. The tract at residues 768 to 802 (EGVKRTLSFSLRSGRVSGRNWKNFALVPLLRDAST) is interaction with calmodulin. Ser775 bears the Phosphoserine mark. The interval 778 to 793 (LRSGRVSGRNWKNFAL) is required for PIP2-mediated channel inhibition. Position 801 is a phosphoserine; by PKC/PRKCE and PKC/PRKCZ (Ser801). Residues 802–815 (TRDRHSTQPEEVQL) show a composition bias toward basic and acidic residues. The tract at residues 802-839 (TRDRHSTQPEEVQLKHYTGSLKPEDAEVFKDSMAPGEK) is disordered. Ser821 is modified (phosphoserine). Basic and acidic residues predominate over residues 823-839 (KPEDAEVFKDSMAPGEK).

The protein belongs to the transient receptor (TC 1.A.4) family. TrpV subfamily. TRPV1 sub-subfamily. Homotetramer. May also form a heteromeric channel with TRPV3. Interacts with CALM, PRKCM and CSK. Interacts with PRKCG and NTRK1, probably by forming a trimeric complex. Interacts with PIRT. Interacts with the Scolopendra mutilans RhTx toxin. Interacts with TMEM100. Interacts with PACS2. In terms of processing, phosphorylation by PKA reverses capsaicin-induced dephosphorylation at multiple sites probably including Ser-117 as a major phosphorylation site. Phosphorylation by CAMKII seems to regulate binding to vanilloids. Phosphorylated and modulated by PRKCE, PRKCM and probably PRKCZ. Dephosphorylation by calcineurin seems to lead to receptor desensitization and phosphorylation by CAMKII recovers activity. Detected in neurons in the root ganglia (at protein level). Detected in dorsal root ganglia.

It localises to the postsynaptic cell membrane. It is found in the cell projection. The protein localises to the dendritic spine membrane. The protein resides in the cell membrane. The catalysed reaction is Ca(2+)(in) = Ca(2+)(out). The enzyme catalyses Mg(2+)(in) = Mg(2+)(out). It carries out the reaction Na(+)(in) = Na(+)(out). It catalyses the reaction K(+)(in) = K(+)(out). The channel is sensitized by ATP binding. Repeated stimulation with capsaicin gives rise to progressively smaller responses, due to desensitization. This desensitization is triggered by the influx of calcium ions and is inhibited by elevated ATP levels. Ca(2+) and CALM displace ATP from its binding site and trigger a conformation change that leads to a closed, desensitized channel. The double-knot toxin (DkTx) from the Chinese earth tiger tarantula activates the channel and traps it in an open conformation. The Scolopendra mutilans RhTx toxin potentiates the heat activation pathway mediated by this channel by binding to the charge-rich outer pore region (in an activated state). Channel activity is activated via the interaction with PIRT and phosphatidylinositol 4,5-bisphosphate (PIP2). Both PIRT and PIP2 are required to activate channel activity. Intracellular PIP2 inhibits desensitization. Non-selective calcium permeant cation channel involved in detection of noxious chemical and thermal stimuli. Seems to mediate proton influx and may be involved in intracellular acidosis in nociceptive neurons. Involved in mediation of inflammatory pain and hyperalgesia. Sensitized by a phosphatidylinositol second messenger system activated by receptor tyrosine kinases, which involves PKC isozymes and PCL. Activation by vanilloids, like capsaicin, and temperatures higher than 42 degrees Celsius. Upon activation, exhibits a time- and Ca(2+)-dependent outward rectification, followed by a long-lasting refractory state. Mild extracellular acidic pH (6.5) potentiates channel activation by noxious heat and vanilloids, whereas acidic conditions (pH &lt;6) directly activate the channel. Can be activated by endogenous compounds, including 12-hydroperoxytetraenoic acid and bradykinin. Acts as ionotropic endocannabinoid receptor with central neuromodulatory effects. Triggers a form of long-term depression (TRPV1-LTD) mediated by the endocannabinoid anandamine in the hippocampus and nucleus accumbens by affecting AMPA receptors endocytosis. The polypeptide is Transient receptor potential cation channel subfamily V member 1 (Trpv1) (Mus musculus (Mouse)).